Consider the following 368-residue polypeptide: MNKTITALAILMASFAANASVLPETPVPFKSGTGAIDNDTVYIGLGSAGTAWYKLETQAKDKKWTALAAFPGGPRDQATSAFIDGNLYVFGGIGKNSEGLTQVFNDVHKYNPKTNSWVKLISHAPMGMAGHVTFVHNGKAYVTGGVNQNIFNGYFEDLNEAGKDSTAVDKINAHYFDKKAEDYFFNKFLLSFDPSTQQWSYAGESPWYGTAGAAVVNKGDKTWLINGEAKPGLRTDAVFELDFTGNNLKWNRLAPVSSPDGVAGGFAGISNDSLIFAGGAGFKGSRENYQNGKNYAHEGLKKSYSTDIHLWHNGKWDKSGELSQGRAYGVSLPWNNSLLIIGGETAGGKAVTDSVLISVKDNKVTVQN.

Residues 1–19 (MNKTITALAILMASFAANA) form the signal peptide. Kelch repeat units lie at residues 40-84 (TVYI…AFID), 86-137 (NLYV…FVHN), 139-173 (KAYVTGGVNQNIFNGYFEDLNEAGKDSTAVDKINA), 174-219 (HYFD…VNKG), 222-265 (TWLI…VAGG), 287-336 (ENYQ…PWNN), and 338-367 (LLIIGGETAGGKAVTDSVLISVKDNKVTVQ). Glu228 functions as the Proton acceptor in the catalytic mechanism.

Belongs to the NanM family. As to quaternary structure, homodimer.

The protein resides in the periplasm. The enzyme catalyses N-acetyl-alpha-neuraminate = N-acetyl-beta-neuraminate. Functionally, converts alpha-N-acetylneuranimic acid (Neu5Ac) to the beta-anomer, accelerating the equilibrium between the alpha- and beta-anomers. Probably facilitates sialidase-negative bacteria to compete successfully for limited amounts of extracellular Neu5Ac, which is likely taken up in the beta-anomer. In addition, the rapid removal of sialic acid from solution might be advantageous to the bacterium to damp down host responses. The chain is N-acetylneuraminate epimerase from Escherichia coli O157:H7.